The following is a 352-amino-acid chain: Glycerol-1-phosphate dehydrogenase [NAD(P)+] (352 aa).

NAD(+) is bound by residues 98-102 (GKAID) and 120-123 (TAAS). Aspartate 125 lines the substrate pocket. Serine 129 contacts NAD(+). Substrate is bound at residue aspartate 172. The Zn(2+) site is built by aspartate 172 and histidine 252. Histidine 256 lines the substrate pocket. Position 268 (histidine 268) interacts with Zn(2+).

The protein belongs to the glycerol-1-phosphate dehydrogenase family. It depends on Zn(2+) as a cofactor.

The protein resides in the cytoplasm. The catalysed reaction is sn-glycerol 1-phosphate + NAD(+) = dihydroxyacetone phosphate + NADH + H(+). It carries out the reaction sn-glycerol 1-phosphate + NADP(+) = dihydroxyacetone phosphate + NADPH + H(+). Its pathway is membrane lipid metabolism; glycerophospholipid metabolism. Functionally, catalyzes the NAD(P)H-dependent reduction of dihydroxyacetonephosphate (DHAP or glycerone phosphate) to glycerol 1-phosphate (G1P). The G1P thus generated is used as the glycerophosphate backbone of phospholipids in the cellular membranes of Archaea. This chain is Glycerol-1-phosphate dehydrogenase [NAD(P)+], found in Haloarcula marismortui (strain ATCC 43049 / DSM 3752 / JCM 8966 / VKM B-1809) (Halobacterium marismortui).